Here is a 355-residue protein sequence, read N- to C-terminus: UDP-N-acetylglucosamine--N-acetylmuramyl-(pentapeptide) pyrophosphoryl-undecaprenol N-acetylglucosamine transferase (355 aa).

Residues 12 to 14, Asn-124, Arg-163, Ser-191, Ile-243, 262 to 267, and Gln-288 each bind UDP-N-acetyl-alpha-D-glucosamine; these read TGG and ALTVAE.

Belongs to the glycosyltransferase 28 family. MurG subfamily.

It is found in the cell inner membrane. It catalyses the reaction di-trans,octa-cis-undecaprenyl diphospho-N-acetyl-alpha-D-muramoyl-L-alanyl-D-glutamyl-meso-2,6-diaminopimeloyl-D-alanyl-D-alanine + UDP-N-acetyl-alpha-D-glucosamine = di-trans,octa-cis-undecaprenyl diphospho-[N-acetyl-alpha-D-glucosaminyl-(1-&gt;4)]-N-acetyl-alpha-D-muramoyl-L-alanyl-D-glutamyl-meso-2,6-diaminopimeloyl-D-alanyl-D-alanine + UDP + H(+). Its pathway is cell wall biogenesis; peptidoglycan biosynthesis. Its function is as follows. Cell wall formation. Catalyzes the transfer of a GlcNAc subunit on undecaprenyl-pyrophosphoryl-MurNAc-pentapeptide (lipid intermediate I) to form undecaprenyl-pyrophosphoryl-MurNAc-(pentapeptide)GlcNAc (lipid intermediate II). The polypeptide is UDP-N-acetylglucosamine--N-acetylmuramyl-(pentapeptide) pyrophosphoryl-undecaprenol N-acetylglucosamine transferase (Tolumonas auensis (strain DSM 9187 / NBRC 110442 / TA 4)).